The primary structure comprises 607 residues: Synaptotagmin-like protein 3 (607 aa).

The RabBD domain maps to 4 to 123 (EVDLESFKEL…IKTGEWFFEE (120 aa)). A disordered region spans residues 221-279 (VGHTERRSQSDTAVNVTSRKASTPDILKAFHQEDPKHPPDPVLKQDTPPSSPTHSAVFS). Residues 230–241 (SDTAVNVTSRKA) show a composition bias toward polar residues. Residues 248 to 259 (KAFHQEDPKHPP) show a composition bias toward basic and acidic residues. 2 C2 domains span residues 305–430 (VTGE…ARWY) and 458–590 (LPAG…LQWH).

In terms of assembly, monomer. Binds NRXN1. Binds RAB27A that has been activated by GTP-binding via its N-terminus. As to expression, highly expressed in spleen and lung. Detected at lower levels in heart and testis.

It localises to the endomembrane system. Functionally, may act as Rab effector protein and play a role in vesicle trafficking. Binds phospholipids in the presence of calcium ions. The polypeptide is Synaptotagmin-like protein 3 (Sytl3) (Mus musculus (Mouse)).